Reading from the N-terminus, the 387-residue chain is Peptostreptococcal albumin-binding protein (387 aa).

The N-terminal stretch at 1 to 26 (MKLNKKLLMAALAGAIVVGGGVNTFA) is a signal peptide. Positions 122–155 (LFDKHELGGLGKDKGPGRFDENGWENNEHGYETR) are disordered. The GA module stretch occupies residues 213-265 (TIDQWLLKNAKEDAIAELKKAGITSDFYFNAINKAKTVEEVNALKNEILKAHA). Residues 266 to 360 (GKEVNPSTPE…EKAALPEAGR (95 aa)) are disordered. The span at 270–282 (NPSTPEVTPSVPQ) shows a compositional bias: polar residues. The span at 298–360 (GTKEDGKKEN…EKAALPEAGR (63 aa)) shows a compositional bias: basic and acidic residues. The LPXTG sorting signal signature appears at 355–359 (LPEAG). Pentaglycyl murein peptidoglycan amidated alanine is present on Ala-358. Positions 359–387 (GRRKAEILTLAAASLSSVAGAFISLKKRK) are cleaved as a propeptide — removed by sortase.

It is found in the secreted. The protein localises to the cell wall. In terms of biological role, binds serum albumin. This Finegoldia magna (Peptostreptococcus magnus) protein is Peptostreptococcal albumin-binding protein (pab).